The chain runs to 78 residues: Exodeoxyribonuclease 7 small subunit (78 aa).

This sequence belongs to the XseB family. As to quaternary structure, heterooligomer composed of large and small subunits.

It is found in the cytoplasm. The catalysed reaction is Exonucleolytic cleavage in either 5'- to 3'- or 3'- to 5'-direction to yield nucleoside 5'-phosphates.. Functionally, bidirectionally degrades single-stranded DNA into large acid-insoluble oligonucleotides, which are then degraded further into small acid-soluble oligonucleotides. This chain is Exodeoxyribonuclease 7 small subunit, found in Psychromonas ingrahamii (strain DSM 17664 / CCUG 51855 / 37).